The following is a 363-amino-acid chain: Chorismate synthase (363 aa).

R48 serves as a coordination point for NADP(+). FMN-binding positions include 125-127, 238-239, G278, 293-297, and R319; these read RSS, NA, and KPTAS.

It belongs to the chorismate synthase family. Homotetramer. Requires FMNH2 as cofactor.

It carries out the reaction 5-O-(1-carboxyvinyl)-3-phosphoshikimate = chorismate + phosphate. Its pathway is metabolic intermediate biosynthesis; chorismate biosynthesis; chorismate from D-erythrose 4-phosphate and phosphoenolpyruvate: step 7/7. Functionally, catalyzes the anti-1,4-elimination of the C-3 phosphate and the C-6 proR hydrogen from 5-enolpyruvylshikimate-3-phosphate (EPSP) to yield chorismate, which is the branch point compound that serves as the starting substrate for the three terminal pathways of aromatic amino acid biosynthesis. This reaction introduces a second double bond into the aromatic ring system. This chain is Chorismate synthase, found in Acinetobacter baumannii (strain ACICU).